Consider the following 32-residue polypeptide: Secreted protein F2 (32 aa).

The protein localises to the secreted. In Globisporangium hypogynum (Pythium hypogynum), this protein is Secreted protein F2.